Consider the following 34-residue polypeptide: Cytochrome b6-f complex subunit 8 (34 aa).

Residues 3–23 (IFQIGWAALAAIFTFSIAMVV) form a helical membrane-spanning segment.

The protein belongs to the PetN family. As to quaternary structure, the 4 large subunits of the cytochrome b6-f complex are cytochrome b6, subunit IV (17 kDa polypeptide, PetD), cytochrome f and the Rieske protein, while the 4 small subunits are PetG, PetL, PetM and PetN. The complex functions as a dimer.

The protein resides in the cellular thylakoid membrane. Its function is as follows. Component of the cytochrome b6-f complex, which mediates electron transfer between photosystem II (PSII) and photosystem I (PSI), cyclic electron flow around PSI, and state transitions. The sequence is that of Cytochrome b6-f complex subunit 8 from Prochlorococcus marinus subsp. pastoris (strain CCMP1986 / NIES-2087 / MED4).